The primary structure comprises 124 residues: Small ribosomal subunit protein uS12 (124 aa).

A 3-methylthioaspartic acid modification is found at aspartate 89.

It belongs to the universal ribosomal protein uS12 family. Part of the 30S ribosomal subunit. Contacts proteins S8 and S17. May interact with IF1 in the 30S initiation complex.

In terms of biological role, with S4 and S5 plays an important role in translational accuracy. Functionally, interacts with and stabilizes bases of the 16S rRNA that are involved in tRNA selection in the A site and with the mRNA backbone. Located at the interface of the 30S and 50S subunits, it traverses the body of the 30S subunit contacting proteins on the other side and probably holding the rRNA structure together. The combined cluster of proteins S8, S12 and S17 appears to hold together the shoulder and platform of the 30S subunit. The sequence is that of Small ribosomal subunit protein uS12 from Hamiltonella defensa subsp. Acyrthosiphon pisum (strain 5AT).